The following is a 985-amino-acid chain: Ankyrin repeat domain-containing protein 24 (985 aa).

ANK repeat units lie at residues 52 to 81 (EGKS…DVMS), 85 to 114 (AGYN…VVDI), 118 to 147 (SGWT…HMNP), 151 to 180 (SGAT…ATND), and 184 to 213 (QGRT…QLSI). Disordered stretches follow at residues 243 to 293 (RSSP…DRDA), 311 to 360 (IRGL…LGRE), 386 to 412 (QDEE…SAEE), 476 to 503 (YTEA…TAYQ), and 594 to 614 (DNAE…NPGM). Positions 291–488 (RDAYEEIVRL…AMHSQQQQQE (198 aa)) form a coiled coil. 2 stretches are compositionally biased toward basic and acidic residues: residues 311–326 (IRGL…KEPL) and 349–360 (EKQEEKESLGRE).

As to quaternary structure, homodimer. Interacts (via C-terminal domain) with TRIOBP (via C-terminal domain) isoform 4; recruits TRIOBP isoform 4 to stereocilia rootlets. In terms of tissue distribution, expressed in vestibular hair bundles.

It localises to the cell membrane. The protein localises to the cell projection. It is found in the stereocilium. Functionally, component of the stereocilia rootlet in hair cells of inner ear. Bridges the apical plasma membrane with the lower rootlet and maintains normal distribution of TRIOBP, thereby reinforcing stereocilia insertion points and organizing rootlets for hearing with long-term resilience. This chain is Ankyrin repeat domain-containing protein 24 (Ankrd24), found in Mus musculus (Mouse).